The chain runs to 191 residues: Putative RNA-binding protein EEED8.4 (191 aa).

Positions 55–132 constitute an RRM domain; that stretch reads KSVFIGNVDF…RPIVVTAKRT (78 aa). The segment at 136 to 160 is disordered; it reads GMGHGVRGSSRGTFGRGRGAARGAP.

The sequence is that of Putative RNA-binding protein EEED8.4 from Caenorhabditis elegans.